The chain runs to 85 residues: Putative membrane protein insertion efficiency factor (85 aa).

It belongs to the UPF0161 family.

The protein resides in the cell inner membrane. Functionally, could be involved in insertion of integral membrane proteins into the membrane. The protein is Putative membrane protein insertion efficiency factor of Phenylobacterium zucineum (strain HLK1).